Reading from the N-terminus, the 157-residue chain is MVYPVRNKDDLDQQLILAEDKLVVIDFYADWCGPCKIIAPKLDELAHEYSDRVVVLKVNVDENEDITVEYNVNSMPTFVFIKGGNVLELFVGCNSDKLAKLMEKHAGVYTDEAADVKAVHIDGECIVDLTAESSESDNDNNNVNEVSAHDENAVLEH.

The Thioredoxin domain maps to 2 to 107 (VYPVRNKDDL…LAKLMEKHAG (106 aa)). A disulfide bond links Cys32 and Cys35. Residues 132 to 157 (ESSESDNDNNNVNEVSAHDENAVLEH) form a disordered region. Residues 147–157 (SAHDENAVLEH) show a composition bias toward basic and acidic residues.

It belongs to the thioredoxin family. In terms of tissue distribution, testis specific. Not expressed in the embryo. Becomes progressively more strongly expressed during larval and pupal development. In testis, it is strongly expressed in young spermatocytes, and postmeiotic spermatid stages, then expression decreases at the nuclear elongation stage. Strongly expressed in the waste bag, in which material no longer needed for the mature sperm is eliminated. Not expressed in the stem cells and spermatogonial cells.

It is found in the nucleus. The protein resides in the chromosome. Probably participates in various redox reactions through the reversible oxidation of its active center dithiol to a disulfide and catalyzes dithiol-disulfide exchange reactions. Its tissue specificity suggests a regulatory role in the germline. This Drosophila melanogaster (Fruit fly) protein is Thioredoxin-T (TrxT).